Reading from the N-terminus, the 357-residue chain is Histidinol-phosphate aminotransferase (357 aa).

K222 bears the N6-(pyridoxal phosphate)lysine mark.

It belongs to the class-II pyridoxal-phosphate-dependent aminotransferase family. Histidinol-phosphate aminotransferase subfamily. In terms of assembly, homodimer. The cofactor is pyridoxal 5'-phosphate.

It carries out the reaction L-histidinol phosphate + 2-oxoglutarate = 3-(imidazol-4-yl)-2-oxopropyl phosphate + L-glutamate. The protein operates within amino-acid biosynthesis; L-histidine biosynthesis; L-histidine from 5-phospho-alpha-D-ribose 1-diphosphate: step 7/9. The chain is Histidinol-phosphate aminotransferase from Leuconostoc mesenteroides subsp. mesenteroides (strain ATCC 8293 / DSM 20343 / BCRC 11652 / CCM 1803 / JCM 6124 / NCDO 523 / NBRC 100496 / NCIMB 8023 / NCTC 12954 / NRRL B-1118 / 37Y).